The sequence spans 572 residues: Formate--tetrahydrofolate ligase (572 aa).

Residue 81–88 (TPAGEGKT) participates in ATP binding.

The protein belongs to the formate--tetrahydrofolate ligase family.

It carries out the reaction (6S)-5,6,7,8-tetrahydrofolate + formate + ATP = (6R)-10-formyltetrahydrofolate + ADP + phosphate. Its pathway is one-carbon metabolism; tetrahydrofolate interconversion. The chain is Formate--tetrahydrofolate ligase from Granulibacter bethesdensis (strain ATCC BAA-1260 / CGDNIH1).